We begin with the raw amino-acid sequence, 212 residues long: Thymidylate kinase (212 aa).

An ATP-binding site is contributed by 7–14 (GIEGSGKS).

This sequence belongs to the thymidylate kinase family.

The catalysed reaction is dTMP + ATP = dTDP + ADP. Phosphorylation of dTMP to form dTDP in both de novo and salvage pathways of dTTP synthesis. This is Thymidylate kinase from Oleidesulfovibrio alaskensis (strain ATCC BAA-1058 / DSM 17464 / G20) (Desulfovibrio alaskensis).